A 355-amino-acid chain; its full sequence is Erythronate-4-phosphate dehydrogenase (355 aa).

Positions 45 and 66 each coordinate substrate. D146 contributes to the NAD(+) binding site. R206 is a catalytic residue. D229 provides a ligand contact to NAD(+). E234 is an active-site residue. H251 functions as the Proton donor in the catalytic mechanism. G254 lines the NAD(+) pocket. Substrate is bound at residue Y255.

Belongs to the D-isomer specific 2-hydroxyacid dehydrogenase family. PdxB subfamily. As to quaternary structure, homodimer.

It is found in the cytoplasm. It carries out the reaction 4-phospho-D-erythronate + NAD(+) = (R)-3-hydroxy-2-oxo-4-phosphooxybutanoate + NADH + H(+). The protein operates within cofactor biosynthesis; pyridoxine 5'-phosphate biosynthesis; pyridoxine 5'-phosphate from D-erythrose 4-phosphate: step 2/5. Catalyzes the oxidation of erythronate-4-phosphate to 3-hydroxy-2-oxo-4-phosphonooxybutanoate. This is Erythronate-4-phosphate dehydrogenase from Acinetobacter baumannii (strain AB307-0294).